Here is a 1416-residue protein sequence, read N- to C-terminus: Tiny macrocysts protein B (1416 aa).

The next 8 membrane-spanning stretches (helical) occupy residues 47-67, 93-113, 140-160, 185-205, 231-251, 253-273, 285-305, and 315-335; these read ILTILSMLIEFCQLSSFGFKH, FGYLGFTILFWIAVGLLILGF, FVSFSVAVLFIPIISLLLIGL, ANLPIAVISIILIVVFSIVAF, VTVLFAKFVFAFFNSLVDFVP, LTSITFFVFMVILTFGSIIVL, SGFYTVVLWVSFMTLVTMGIN, and ITIVGVFFAFPIGFFSNMFYF. A compositionally biased stretch (basic and acidic residues) spans 356 to 372; it reads LKDANKKGKRNSVEKES. 2 disordered regions span residues 356–377 and 662–691; these read LKDANKKGKRNSVEKESSPTSK and IEKSGSKSGSSKSKDDSSESSSSSKGRRGK. A run of 2 helical transmembrane segments spans residues 706–726 and 953–973; these read WLMIGTTCCCIIFLIVVLVVF and AILYTWCGIFAVLFLICAVLF. Disordered stretches follow at residues 1018–1103 and 1119–1144; these read RDNL…RPLM and NVRLQAKDEEITNGGGERKGSDATRT. The segment covering 1024–1039 has biased composition (acidic residues); the sequence is TTDDDGRDDHLGEDDN. 2 stretches are compositionally biased toward low complexity: residues 1048-1062 and 1083-1094; these read NNNNNNNNNNNNNNN and SSSGSNVLNTSS. Positions 1123–1144 are enriched in basic and acidic residues; that stretch reads QAKDEEITNGGGERKGSDATRT. The next 3 helical transmembrane spans lie at 1179–1199, 1325–1345, and 1358–1378; these read ILATFLLFGFITMGIWVTFTV, WFLALIDYIFIGLDTATFTYF, and VLTAILSVSCVILLVVHVVLF.

The protein resides in the membrane. In terms of biological role, regulator of the cAMP signaling pathway specific to sexual development. Controls the levels of external cAMP by regulating the expression of phosphodiesterase pdsA and its inhibitor pdiA. The chain is Tiny macrocysts protein B (tmcB) from Dictyostelium discoideum (Social amoeba).